The sequence spans 1442 residues: DNA-binding protein RFX7 (1442 aa).

The disordered stretch occupies residues methionine 1–alanine 36. Positions alanine 112–alanine 187 form a DNA-binding region, RFX-type winged-helix. Residues proline 192–leucine 197 carry the PxLPxI/L motif motif. Disordered stretches follow at residues methionine 406–serine 426, serine 485–serine 514, and serine 929–proline 1001. Residues threonine 935–threonine 947 are compositionally biased toward pro residues. Residues glycine 957–cysteine 995 show a composition bias toward polar residues.

It belongs to the RFX family.

The protein localises to the nucleus. Transcription factor. Acts as a transcriptional activator by binding to promoter regions of target genes. Plays a role in natural killer (NK) cell maintenance and immunity. Plays a role in the process of ciliogenesis in the neural tube and neural tube closure by regulating the expression of RFX4. The polypeptide is DNA-binding protein RFX7 (Xenopus laevis (African clawed frog)).